Reading from the N-terminus, the 374-residue chain is Putative glutamate--cysteine ligase 2 (374 aa).

This sequence belongs to the glutamate--cysteine ligase type 2 family. YbdK subfamily.

It carries out the reaction L-cysteine + L-glutamate + ATP = gamma-L-glutamyl-L-cysteine + ADP + phosphate + H(+). In terms of biological role, ATP-dependent carboxylate-amine ligase which exhibits weak glutamate--cysteine ligase activity. This is Putative glutamate--cysteine ligase 2 from Acidovorax ebreus (strain TPSY) (Diaphorobacter sp. (strain TPSY)).